The following is a 371-amino-acid chain: uncharacterized protein (371 aa).

A coiled-coil region spans residues 287–323; the sequence is EVVTALDRYRQHLRETRERLEEKQGKLLEELKGYESM.

This is an uncharacterized protein from Aspergillus fumigatus (strain ATCC MYA-4609 / CBS 101355 / FGSC A1100 / Af293) (Neosartorya fumigata).